A 240-amino-acid chain; its full sequence is Nuclear receptor-interacting protein 3 (240 aa).

In Pongo abelii (Sumatran orangutan), this protein is Nuclear receptor-interacting protein 3 (NRIP3).